The sequence spans 133 residues: Fatty acid-binding protein, heart (133 aa).

At valine 2 the chain carries N-acetylvaline. Threonine 8 carries the post-translational modification Phosphothreonine. Tyrosine 20 is modified (phosphotyrosine; by Tyr-kinases). Serine 23 is modified (phosphoserine). Position 30 is a phosphothreonine (threonine 30). Phosphoserine is present on serine 83. Residue 127 to 129 (RTY) coordinates (9Z)-octadecenoate. 127–129 (RTY) contributes to the hexadecanoate binding site. 127 to 129 (RTY) serves as a coordination point for octadecanoate.

Belongs to the calycin superfamily. Fatty-acid binding protein (FABP) family.

It is found in the cytoplasm. Its function is as follows. FABPs are thought to play a role in the intracellular transport of long-chain fatty acids and their acyl-CoA esters. The polypeptide is Fatty acid-binding protein, heart (FABP3) (Homo sapiens (Human)).